A 366-amino-acid polypeptide reads, in one-letter code: MEKVVCIGCGVTIQTEDKTGLGYAPPASLTKENVICQRCFRLKNYNEIQDVSLTDDDFLNILHGIGETDSLVVKIVDIFDFNGSWINGLQRLVGGNPILLVGNKADILPKSLKRERLIQWMKREAKELGLKPVDVFLVSAGRGQGIREVIDAIEHYRNGKDVYVVGCTNVGKSTFINRIIKEVSGEEDIITTSQFPGTTLDAIEIPLDDGSSLYDTPGIINNHQMAHYVNKKDLKILSPKKELKPRTFQLNDQQTLYFGGLARFDYVSGERSPFICYMPNELMIHRTKLENADALYEKHAGELLTPPGKDEMDEFPELVAHTFTIKDKKTDIVFSGLGWVTVHDADKKVTAYAPKGVHVFVRRSLI.

The 164-residue stretch at 59-222 (LNILHGIGET…LYDTPGIINN (164 aa)) folds into the CP-type G domain.

It belongs to the TRAFAC class YlqF/YawG GTPase family.

Binds GTP and GDP. This is an uncharacterized protein from Bacillus subtilis (strain 168).